Reading from the N-terminus, the 88-residue chain is Apolipoprotein C-I (88 aa).

A signal peptide spans 1–26 (MRLFLSLPVLVVVLAMVLEGPAPTQA).

This sequence belongs to the apolipoprotein C1 family.

The protein resides in the secreted. In terms of biological role, inhibitor of lipoprotein binding to the low density lipoprotein (LDL) receptor, LDL receptor-related protein, and very low density lipoprotein (VLDL) receptor. Associates with high density lipoproteins (HDL) and the triacylglycerol-rich lipoproteins in the plasma and makes up about 10% of the protein of the VLDL and 2% of that of HDL. Appears to interfere directly with fatty acid uptake and is also the major plasma inhibitor of cholesteryl ester transfer protein (CETP). Binds free fatty acids and reduces their intracellular esterification. Modulates the interaction of APOE with beta-migrating VLDL and inhibits binding of beta-VLDL to the LDL receptor-related protein. This is Apolipoprotein C-I (APOC1) from Phoca vitulina (Harbor seal).